The primary structure comprises 237 residues: Phosphoadenosine 5'-phosphosulfate reductase (237 aa).

The Nucleophile; cysteine thiosulfonate intermediate role is filled by Cys-231.

This sequence belongs to the PAPS reductase family. CysH subfamily.

It is found in the cytoplasm. It catalyses the reaction [thioredoxin]-disulfide + sulfite + adenosine 3',5'-bisphosphate + 2 H(+) = [thioredoxin]-dithiol + 3'-phosphoadenylyl sulfate. It participates in sulfur metabolism; hydrogen sulfide biosynthesis; sulfite from sulfate: step 3/3. Functionally, catalyzes the formation of sulfite from phosphoadenosine 5'-phosphosulfate (PAPS) using thioredoxin as an electron donor. This chain is Phosphoadenosine 5'-phosphosulfate reductase, found in Xylella fastidiosa (strain M12).